The sequence spans 239 residues: Probable methylthioribulose-1-phosphate dehydratase (239 aa).

Cysteine 100 serves as a coordination point for substrate. Residues histidine 118 and histidine 120 each coordinate Zn(2+). Glutamate 141 functions as the Proton donor/acceptor in the catalytic mechanism. Residue histidine 197 participates in Zn(2+) binding.

This sequence belongs to the aldolase class II family. MtnB subfamily. The cofactor is Zn(2+).

It localises to the cytoplasm. It carries out the reaction 5-(methylsulfanyl)-D-ribulose 1-phosphate = 5-methylsulfanyl-2,3-dioxopentyl phosphate + H2O. It functions in the pathway amino-acid biosynthesis; L-methionine biosynthesis via salvage pathway; L-methionine from S-methyl-5-thio-alpha-D-ribose 1-phosphate: step 2/6. Its function is as follows. Catalyzes the dehydration of methylthioribulose-1-phosphate (MTRu-1-P) into 2,3-diketo-5-methylthiopentyl-1-phosphate (DK-MTP-1-P). The protein is Probable methylthioribulose-1-phosphate dehydratase of Leishmania major.